The primary structure comprises 572 residues: Asparagine synthetase [glutamine-hydrolyzing] 1 (572 aa).

Cys2 (for GATase activity) is an active-site residue. The Glutamine amidotransferase type-2 domain maps to 2–186; the sequence is CGIFAAFRHE…PGHVYDSKTD (185 aa). L-glutamine contacts are provided by residues 49–53, 74–76, and Asp97; these read RLAIV and NGE. An Asparagine synthetase domain is found at 194-546; it reads PDWLDEKRIP…QKTVADTVMR (353 aa). Leu233 is a binding site for ATP. The residue at position 265 (Ser265) is a Phosphoserine. Residues Ile292 and 366 to 367 each bind ATP; that span reads SG. Ser509 carries the post-translational modification Phosphoserine.

The catalysed reaction is L-aspartate + L-glutamine + ATP + H2O = L-asparagine + L-glutamate + AMP + diphosphate + H(+). It functions in the pathway amino-acid biosynthesis; L-asparagine biosynthesis; L-asparagine from L-aspartate (L-Gln route): step 1/1. In Saccharomyces cerevisiae (strain ATCC 204508 / S288c) (Baker's yeast), this protein is Asparagine synthetase [glutamine-hydrolyzing] 1 (ASN1).